Reading from the N-terminus, the 222-residue chain is Charged multivesicular body protein 3 (222 aa).

G2 carries N-myristoyl glycine lipidation. The segment at G2–A113 is intramolecular interaction with C-terminus. A coiled-coil region spans residues K22–K54. Important for autoinhibitory function regions lie at residues V59–A64 and I168–L169. Residues E141–S222 adopt a coiled-coil conformation. The interval M151–L220 is intramolecular interaction with N-terminus. The interval M151–S222 is interaction with VPS4A. K179 participates in a covalent cross-link: Glycyl lysine isopeptide (Lys-Gly) (interchain with G-Cter in ubiquitin). Residues A180–S222 form a disordered region. Interaction with STAMBP stretches follow at residues A196–S222, E203–E207, and R221–S222. S200 carries the phosphoserine modification. Residues S200–L210 show a composition bias toward acidic residues. Positions E201–E211 match the MIT-interacting motif motif.

The protein belongs to the SNF7 family. In terms of assembly, probable core component of the endosomal sorting required for transport complex III (ESCRT-III). ESCRT-III components are thought to multimerize to form a flat lattice on the perimeter membrane of the endosome. Several assembly forms of ESCRT-III may exist that interact and act sequentially. Forms a metastable monomer in solution; its core structure (without part of the putative autoinhibitory C-terminal acidic region) oligomerizes into a flat lattice via two different dimerization interfaces. In vitro, heteromerizes with CHMP2A (but not CHMP4) to form helical tubular structures that expose membrane-interacting sites on the outside whereas VPS4B can associate on the inside of the tubule. May interact with IGFBP7; the relevance of such interaction however remains unclear. Interacts with CHMP2A. Interacts with CHMP4A; the interaction requires the release of CHMP4A autoinhibition. Interacts with VPS4A. Interacts with STAMBP; the interaction appears to relieve the autoinhibition of CHMP3. Interacts with VTA1.

Its subcellular location is the cytoplasm. It localises to the cytosol. The protein resides in the membrane. The protein localises to the endosome. It is found in the late endosome membrane. Its function is as follows. Probable core component of the endosomal sorting required for transport complex III (ESCRT-III) which is involved in multivesicular bodies (MVBs) formation and sorting of endosomal cargo proteins into MVBs. MVBs contain intraluminal vesicles (ILVs) that are generated by invagination and scission from the limiting membrane of the endosome and mostly are delivered to lysosomes enabling degradation of membrane proteins, such as stimulated growth factor receptors, lysosomal enzymes and lipids. The MVB pathway appears to require the sequential function of ESCRT-O, -I,-II and -III complexes. ESCRT-III proteins mostly dissociate from the invaginating membrane before the ILV is released. The ESCRT machinery also functions in topologically equivalent membrane fission events, such as the terminal stages of cytokinesis and the budding of enveloped viruses (lentiviruses). ESCRT-III proteins are believed to mediate the necessary vesicle extrusion and/or membrane fission activities, possibly in conjunction with the AAA ATPase VPS4. Selectively binds to phosphatidylinositol 3,5-bisphosphate PtdIns(3,5)P2 and PtdIns(3,4)P2 in preference to other phosphoinositides tested. Involved in late stages of cytokinesis. Plays a role in endosomal sorting/trafficking of EGF receptor. In Pongo abelii (Sumatran orangutan), this protein is Charged multivesicular body protein 3 (CHMP3).